A 103-amino-acid chain; its full sequence is Pyrimidine/purine nucleoside phosphorylase (103 aa).

The protein belongs to the nucleoside phosphorylase PpnP family.

The enzyme catalyses a purine D-ribonucleoside + phosphate = a purine nucleobase + alpha-D-ribose 1-phosphate. It carries out the reaction adenosine + phosphate = alpha-D-ribose 1-phosphate + adenine. It catalyses the reaction cytidine + phosphate = cytosine + alpha-D-ribose 1-phosphate. The catalysed reaction is guanosine + phosphate = alpha-D-ribose 1-phosphate + guanine. The enzyme catalyses inosine + phosphate = alpha-D-ribose 1-phosphate + hypoxanthine. It carries out the reaction thymidine + phosphate = 2-deoxy-alpha-D-ribose 1-phosphate + thymine. It catalyses the reaction uridine + phosphate = alpha-D-ribose 1-phosphate + uracil. The catalysed reaction is xanthosine + phosphate = alpha-D-ribose 1-phosphate + xanthine. In terms of biological role, catalyzes the phosphorolysis of diverse nucleosides, yielding D-ribose 1-phosphate and the respective free bases. Can use uridine, adenosine, guanosine, cytidine, thymidine, inosine and xanthosine as substrates. Also catalyzes the reverse reactions. The polypeptide is Pyrimidine/purine nucleoside phosphorylase (Chlorobium chlorochromatii (strain CaD3)).